A 632-amino-acid chain; its full sequence is Palmitoyltransferase ZDHHC17 (632 aa).

Residues 1–304 (MQREEGFNTK…LKADKEFRQK (304 aa)) are Cytoplasmic-facing. The necessary and sufficient for interaction with DNAJC5 and SNAP25 stretch occupies residues 11–305 (MADGPDEYET…KADKEFRQKV (295 aa)). 7 ANK repeats span residues 51 to 86 (THIDDYSTWDIVKATQYGIYERCRELVEAGYDVRQP), 89 to 118 (ENVTLLHWAAINNRIDLVKYYISKGAIVDQ), 123 to 152 (LNSTPLHWATRQGHLSMVVQLMKYGADPSL), 156 to 185 (EGCSCIHLAAQFGHTSIVAYLIAKGQDVDM), 189 to 219 (NGMTPLMWAAYRTHSVDPTRLLLTFNVSVNL), 224 to 253 (HKNTALHWAVLAGNTTVISLLLEAGGNVDA), and 257 to 286 (KGESALDLAKQRKNVWMINHLQEARQAKGY). The next 2 helical transmembrane spans lie at 305–325 (VMLGTPFLVIWLVGFIADLDI) and 326–346 (DSWLIKGLMYGGVWATVQFLS). Topologically, residues 347-357 (KSFFDHSMHSA) are cytoplasmic. A helical membrane pass occupies residues 358-378 (LPLGIYLATKFWMYVTWFFWF). Residues 379-381 (WND) are Lumenal-facing. A helical membrane pass occupies residues 382-402 (LNFLFIHLPFLANSVALFYNF). Residues 403–480 (GKSWKSDPGI…GNCVGAGNHR (78 aa)) are Cytoplasmic-facing. In terms of domain architecture, DHHC spans 437–487 (IFCSTCLIRKPVRSKHCGVCNRCIAKFDHHCPWVGNCVGAGNHRYFMGYLF). The S-palmitoyl cysteine intermediate role is filled by C467. Residues 481 to 501 (YFMGYLFFLLFMICWMIYGCV) form a helical membrane-spanning segment. The Lumenal segment spans residues 502 to 529 (SYWGLHCETTYTKDGFWTYITQIATCSP). The helical transmembrane segment at 530-550 (WMFWMFLNSVFHFLWVAVLLM) threads the bilayer. Residues 551–632 (CQLYQITCLG…QISGSGYQLV (82 aa)) lie on the Cytoplasmic side of the membrane.

It belongs to the DHHC palmitoyltransferase family. AKR/ZDHHC17 subfamily. Interacts (via ANK repeats) with numerous proteins (via the consensus sequence motif [VIAP]-[VIT]-x-x-Q-P). Interacts (via ANK repeats) with CLIP3. Interacts (via ANK repeats) with HTT. Interacts (via ANK repeats) with DNAJC5 (via C-terminus). Interacts (via ANK repeats) with MAP6. Interacts (via ANK repeats) with SNAP23. Interacts (via ANK repeats) with SNAP25. Interacts (via ANK repeats) with EVL. Interacts with SPRED1 and SPRED3. Interacts with GPM6A and OPTN. May interact (via ANK repeats) with SPRED2. May interact with NTRK1; may regulate its localization and function. Post-translationally, autopalmitoylated. Autopalmitoylation has a regulatory role in ZDHHC17-mediated Mg(2+) transport. In terms of tissue distribution, expressed in liver, testis, kidney, heart, pancreas and brain. Highest expression was seen in the brain. Localized predominantly in the perinuclear regions of neurons from the cortex, striatum and hippocampus. Colocalized with HTT in the medium spiny neurons of the striatum and the spiny neurons that project into the globus pallidus.

It localises to the golgi apparatus membrane. It is found in the cytoplasmic vesicle membrane. Its subcellular location is the presynaptic cell membrane. It carries out the reaction L-cysteinyl-[protein] + hexadecanoyl-CoA = S-hexadecanoyl-L-cysteinyl-[protein] + CoA. It catalyses the reaction L-cysteinyl-[protein] + tetradecanoyl-CoA = S-tetradecanoyl-L-cysteinyl-[protein] + CoA. The enzyme catalyses L-cysteinyl-[protein] + octadecanoyl-CoA = S-octadecanoyl-L-cysteinyl-[protein] + CoA. In terms of biological role, palmitoyltransferase that catalyzes the addition of palmitate onto various protein substrates and is involved in a variety of cellular processes. Has no stringent fatty acid selectivity and in addition to palmitate can also transfer onto target proteins myristate from tetradecanoyl-CoA and stearate from octadecanoyl-CoA. Palmitoyltransferase specific for a subset of neuronal proteins, including SNAP25, DLG4/PSD95, GAD2, SYT1 and HTT. Also palmitoylates neuronal protein GPM6A as well as SPRED1 and SPRED3. Could also play a role in axonogenesis through the regulation of NTRK1 and the downstream ERK1/ERK2 signaling cascade. May be involved in the sorting or targeting of critical proteins involved in the initiating events of endocytosis at the plasma membrane. May play a role in Mg(2+) transport. Could also palmitoylate DNAJC5 and regulate its localization to the Golgi membrane. Palmitoylates CASP6, thereby preventing its dimerization and subsequent activation. The polypeptide is Palmitoyltransferase ZDHHC17 (Mus musculus (Mouse)).